Reading from the N-terminus, the 335-residue chain is Galactosylgalactosylxylosylprotein 3-beta-glucuronosyltransferase 1 (335 aa).

The Cytoplasmic segment spans residues 1–6 (MPKRRD). The essential for transport from endoplasmic reticulum to Golgi apparatus and interaction with SAR1A stretch occupies residues 3–5 (KRR). Residues 7-27 (ILAIVLIVLPWTLLVTVWHQS) traverse the membrane as a helical; Signal-anchor for type II membrane protein segment. At 28-335 (TIAPLLTTHK…KGFTDPTVEI (308 aa)) the chain is on the lumenal side. 92 to 94 (PTY) is a binding site for UDP-alpha-D-glucuronate. Thr104 and Thr109 each carry phosphothreonine. Residue Asp123 participates in UDP-alpha-D-glucuronate binding. Asn141 is a glycosylation site (N-linked (GlcNAc...) asparagine). UDP-alpha-D-glucuronate is bound by residues Arg166 and Arg171. N-linked (GlcNAc...) asparagine glycosylation is present at Asn185. UDP-alpha-D-glucuronate is bound at residue 196–198 (DDD). Asp198 serves as a coordination point for Mn(2+). Positions 246-255 (FDPHRPFAID) are interaction with galactose moiety of substrate glycoprotein. The active-site Proton donor/acceptor is the Glu285. Asn304 carries N-linked (GlcNAc...) asparagine glycosylation. A UDP-alpha-D-glucuronate-binding site is contributed by 312–314 (HTR).

The protein belongs to the glycosyltransferase 43 family. Homodimer. Interacts with SAR1A. It depends on Mn(2+) as a cofactor. Post-translationally, the soluble form derives from the membrane form by proteolytic processing.

It is found in the golgi apparatus membrane. The protein localises to the secreted. It carries out the reaction 3-O-(beta-D-galactosyl-(1-&gt;3)-beta-D-galactosyl-(1-&gt;4)-beta-D-xylosyl)-L-seryl-[protein] + UDP-alpha-D-glucuronate = 3-O-(beta-D-GlcA-(1-&gt;3)-beta-D-Gal-(1-&gt;3)-beta-D-Gal-(1-&gt;4)-beta-D-Xyl)-L-seryl-[protein] + UDP + H(+). Its pathway is protein modification; protein glycosylation. In terms of biological role, involved in the biosynthesis of L2/HNK-1 carbohydrate epitope on glycoproteins. Can also play a role in glycosaminoglycan biosynthesis. Substrates include asialo-orosomucoid (ASOR), asialo-fetuin, and asialo-neural cell adhesion molecule. Requires sphingomyelin for activity: stearoyl-sphingomyelin was the most effective, followed by palmitoyl-sphingomyelin and lignoceroyl-sphingomyelin. Activity was demonstrated only for sphingomyelin with a saturated fatty acid and not for that with an unsaturated fatty acid, regardless of the length of the acyl group. The polypeptide is Galactosylgalactosylxylosylprotein 3-beta-glucuronosyltransferase 1 (Canis lupus familiaris (Dog)).